Here is a 184-residue protein sequence, read N- to C-terminus: MTIMSDKWIREQATKNGMIEPFVEAQRRDGCISYGLSSYGYDARVAPEFKIFTNVDSATVDPKDFASNSFVDRETDVCIIPPNSFALARTVEYFRVPRDVLVICLGKSTYARCGIIVNVTPLEPGWEGHVTLEFSNTTPLPAKIYANEGACQFLFLQGNEPCEISYADRAGKYMGQQGVTLPRL.

Residues 107–112, 131–133, glutamine 152, tyrosine 166, and glutamine 176 each bind dCTP; these read KSTYAR and TLE. Glutamate 133 acts as the Proton donor/acceptor in catalysis.

The protein belongs to the dCTP deaminase family. As to quaternary structure, homotrimer.

The catalysed reaction is dCTP + H2O + H(+) = dUTP + NH4(+). It participates in pyrimidine metabolism; dUMP biosynthesis; dUMP from dCTP (dUTP route): step 1/2. Catalyzes the deamination of dCTP to dUTP. This Rhizorhabdus wittichii (strain DSM 6014 / CCUG 31198 / JCM 15750 / NBRC 105917 / EY 4224 / RW1) (Sphingomonas wittichii) protein is dCTP deaminase.